We begin with the raw amino-acid sequence, 368 residues long: Quinolinate synthase (368 aa).

Iminosuccinate is bound by residues His46 and Ser63. Cys110 serves as a coordination point for [4Fe-4S] cluster. Residues 141 to 143 (YVN) and Ser162 contribute to the iminosuccinate site. Cys230 lines the [4Fe-4S] cluster pocket. Residues 256–258 (HPE) and Thr273 each bind iminosuccinate. Cys320 is a [4Fe-4S] cluster binding site.

This sequence belongs to the quinolinate synthase family. Type 3 subfamily. Requires [4Fe-4S] cluster as cofactor.

The protein resides in the cytoplasm. The enzyme catalyses iminosuccinate + dihydroxyacetone phosphate = quinolinate + phosphate + 2 H2O + H(+). The protein operates within cofactor biosynthesis; NAD(+) biosynthesis; quinolinate from iminoaspartate: step 1/1. Catalyzes the condensation of iminoaspartate with dihydroxyacetone phosphate to form quinolinate. In Bacillus cereus (strain Q1), this protein is Quinolinate synthase.